The primary structure comprises 488 residues: Probable apyrase 5 (488 aa).

Residues 1 to 26 are disordered; it reads MDALKVQILPDNQSSPSSTHMLTKPK. The Cytoplasmic portion of the chain corresponds to 1–32; sequence MDALKVQILPDNQSSPSSTHMLTKPKSKKATK. Residues 10–21 are compositionally biased toward polar residues; that stretch reads PDNQSSPSSTHM. Residues 33-53 form a helical; Signal-anchor for type II membrane protein membrane-spanning segment; it reads SIAMLIVASLAITLGLLFVFS. The Extracellular portion of the chain corresponds to 54 to 488; sequence SNSVMFSASF…GKSRKMIGFK (435 aa). Residue 73–83 participates in ATP binding; it reads VIIDAGSSGTR. Catalysis depends on Glu196, which acts as the Proton acceptor. An ATP-binding site is contributed by 220–230; that stretch reads GIVELGGASAQ. The N-linked (GlcNAc...) asparagine glycan is linked to Asn251.

It belongs to the GDA1/CD39 NTPase family. The cofactor is Ca(2+). As to expression, highly expressed in young rosette leaves but only weakly in roots.

Its subcellular location is the membrane. The catalysed reaction is a ribonucleoside 5'-triphosphate + 2 H2O = a ribonucleoside 5'-phosphate + 2 phosphate + 2 H(+). In terms of biological role, catalyzes the hydrolysis of phosphoanhydride bonds of nucleoside tri- and di-phosphates. This is Probable apyrase 5 (APY5) from Arabidopsis thaliana (Mouse-ear cress).